The sequence spans 475 residues: Ribulose bisphosphate carboxylase large chain (475 aa).

The propeptide occupies 1–2; the sequence is MS. The residue at position 3 (Pro3) is an N-acetylproline. Position 14 is an N6,N6,N6-trimethyllysine (Lys14). Substrate contacts are provided by Asn123 and Thr173. The active-site Proton acceptor is the Lys175. Substrate is bound at residue Lys177. Mg(2+) is bound by residues Lys201, Asp203, and Glu204. The residue at position 201 (Lys201) is an N6-carboxylysine. His294 serves as the catalytic Proton acceptor. 3 residues coordinate substrate: Arg295, His327, and Ser379.

Belongs to the RuBisCO large chain family. Type I subfamily. As to quaternary structure, heterohexadecamer of 8 large chains and 8 small chains; disulfide-linked. The disulfide link is formed within the large subunit homodimers. Requires Mg(2+) as cofactor. In terms of processing, the disulfide bond which can form in the large chain dimeric partners within the hexadecamer appears to be associated with oxidative stress and protein turnover.

Its subcellular location is the plastid. The protein resides in the chloroplast. The enzyme catalyses 2 (2R)-3-phosphoglycerate + 2 H(+) = D-ribulose 1,5-bisphosphate + CO2 + H2O. It carries out the reaction D-ribulose 1,5-bisphosphate + O2 = 2-phosphoglycolate + (2R)-3-phosphoglycerate + 2 H(+). Functionally, ruBisCO catalyzes two reactions: the carboxylation of D-ribulose 1,5-bisphosphate, the primary event in carbon dioxide fixation, as well as the oxidative fragmentation of the pentose substrate in the photorespiration process. Both reactions occur simultaneously and in competition at the same active site. This Pinus krempfii (Krempf's pine) protein is Ribulose bisphosphate carboxylase large chain.